A 321-amino-acid polypeptide reads, in one-letter code: Phospho-N-acetylmuramoyl-pentapeptide-transferase (321 aa).

10 consecutive transmembrane segments (helical) span residues 1 to 21 (MLFI…PILI), 50 to 70 (MGGL…IFFV), 76 to 96 (IILL…DDYI), 112 to 132 (FLAQ…FHLV), 140 to 160 (IPFT…IVFW), 176 to 196 (GLAT…SFVL), 200 to 220 (AIGA…PYNL), 225 to 245 (VFMG…ISIM), 250 to 270 (LSLL…MLQV), and 300 to 320 (VVTV…WIGV).

Belongs to the glycosyltransferase 4 family. MraY subfamily. Mg(2+) is required as a cofactor.

The protein resides in the cell membrane. It catalyses the reaction UDP-N-acetyl-alpha-D-muramoyl-L-alanyl-gamma-D-glutamyl-L-lysyl-D-alanyl-D-alanine + di-trans,octa-cis-undecaprenyl phosphate = Mur2Ac(oyl-L-Ala-gamma-D-Glu-L-Lys-D-Ala-D-Ala)-di-trans,octa-cis-undecaprenyl diphosphate + UMP. The protein operates within cell wall biogenesis; peptidoglycan biosynthesis. Its function is as follows. Catalyzes the initial step of the lipid cycle reactions in the biosynthesis of the cell wall peptidoglycan: transfers peptidoglycan precursor phospho-MurNAc-pentapeptide from UDP-MurNAc-pentapeptide onto the lipid carrier undecaprenyl phosphate, yielding undecaprenyl-pyrophosphoryl-MurNAc-pentapeptide, known as lipid I. The polypeptide is Phospho-N-acetylmuramoyl-pentapeptide-transferase (Staphylococcus haemolyticus (strain JCSC1435)).